The primary structure comprises 97 residues: Co-chaperonin GroES (97 aa).

Belongs to the GroES chaperonin family. As to quaternary structure, heptamer of 7 subunits arranged in a ring. Interacts with the chaperonin GroEL.

Its subcellular location is the cytoplasm. Functionally, together with the chaperonin GroEL, plays an essential role in assisting protein folding. The GroEL-GroES system forms a nano-cage that allows encapsulation of the non-native substrate proteins and provides a physical environment optimized to promote and accelerate protein folding. GroES binds to the apical surface of the GroEL ring, thereby capping the opening of the GroEL channel. This Nocardioides sp. (strain ATCC BAA-499 / JS614) protein is Co-chaperonin GroES.